A 188-amino-acid chain; its full sequence is Adenine phosphoribosyltransferase (188 aa).

Belongs to the purine/pyrimidine phosphoribosyltransferase family. As to quaternary structure, homodimer.

It localises to the cytoplasm. The enzyme catalyses AMP + diphosphate = 5-phospho-alpha-D-ribose 1-diphosphate + adenine. It functions in the pathway purine metabolism; AMP biosynthesis via salvage pathway; AMP from adenine: step 1/1. In terms of biological role, catalyzes a salvage reaction resulting in the formation of AMP, that is energically less costly than de novo synthesis. In Burkholderia multivorans (strain ATCC 17616 / 249), this protein is Adenine phosphoribosyltransferase.